Here is a 412-residue protein sequence, read N- to C-terminus: Argininosuccinate synthase (412 aa).

ATP is bound by residues 16-24 (AYSGGLDTS) and A44. 2 residues coordinate L-citrulline: Y96 and S101. G126 contributes to the ATP binding site. The L-aspartate site is built by T128, N132, and D133. N132 contacts L-citrulline. L-citrulline is bound by residues R136, S185, S194, E270, and Y282.

Belongs to the argininosuccinate synthase family. Type 1 subfamily. In terms of assembly, homotetramer.

The protein localises to the cytoplasm. It catalyses the reaction L-citrulline + L-aspartate + ATP = 2-(N(omega)-L-arginino)succinate + AMP + diphosphate + H(+). Its pathway is amino-acid biosynthesis; L-arginine biosynthesis; L-arginine from L-ornithine and carbamoyl phosphate: step 2/3. The chain is Argininosuccinate synthase from Shewanella baltica (strain OS185).